Consider the following 222-residue polypeptide: ATP-dependent dethiobiotin synthetase BioD 2 (222 aa).

Thr17 contributes to the Mg(2+) binding site. Lys38 is a catalytic residue. Thr42 contributes to the substrate binding site. Residues Asp55 and Glu112 each contribute to the Mg(2+) site. Residues Asp55, 112–115 (EGCG), 172–173 (NR), 201–203 (PYL), and Glu208 contribute to the ATP site.

This sequence belongs to the dethiobiotin synthetase family. As to quaternary structure, homodimer. It depends on Mg(2+) as a cofactor.

It is found in the cytoplasm. The enzyme catalyses (7R,8S)-7,8-diammoniononanoate + CO2 + ATP = (4R,5S)-dethiobiotin + ADP + phosphate + 3 H(+). Its pathway is cofactor biosynthesis; biotin biosynthesis; biotin from 7,8-diaminononanoate: step 1/2. Catalyzes a mechanistically unusual reaction, the ATP-dependent insertion of CO2 between the N7 and N8 nitrogen atoms of 7,8-diaminopelargonic acid (DAPA, also called 7,8-diammoniononanoate) to form a ureido ring. The sequence is that of ATP-dependent dethiobiotin synthetase BioD 2 from Yersinia pestis.